The primary structure comprises 494 residues: Transcription factor SOX-9 (494 aa).

Disordered stretches follow at residues 1 to 66 (MNLL…ESDE) and 159 to 275 (ERLR…FRDV). The span at 27–42 (SDDSAGSPCPSGSGSD) shows a compositional bias: low complexity. Basic and acidic residues-rich tracts occupy residues 56–66 (GDPDLKKESDE) and 159–174 (ERLR…DYKY). Residues 63–103 (ESDEDKFPVCIREAVSQVLKGYDWTLVPMPVRVNGSSKNKP) form a dimerization (DIM) region. The interval 63–103 (ESDEDKFPVCIREAVSQVLKGYDWTLVPMPVRVNGSSKNKP) is PQA. Serine 64 bears the Phosphoserine mark. The HMG box DNA-binding region spans 105–173 (VKRPMNAFMV…QHKKDHPDYK (69 aa)). Serine 181 is modified (phosphoserine). Over residues 211–222 (SPQSSSSISEVH) the composition is skewed to low complexity. The tract at residues 224-309 (PGEHSGQSQG…LPPNGHPGVP (86 aa)) is transactivation domain (TAM). Short sequence motifs (9aaTAD) lie at residues 277-286 (IGELSSDVIS) and 292-300 (DVNEFDQYL). Residues 326–337 (SSASSPAGAGHA) are compositionally biased toward low complexity. Residues 326–402 (SSASSPAGAG…PQQQQQQQQQ (77 aa)) form a disordered region. Residues 344 to 353 (PQPPQPPAQP) show a composition bias toward pro residues. The tract at residues 372–494 (RPHIKTEQLS…QPVYTQLTRP (123 aa)) is transactivation domain (TAC). Residue lysine 376 forms a Glycyl lysine isopeptide (Lys-Gly) (interchain with G-Cter in SUMO) linkage. Over residues 378–387 (EQLSPSHYSE) the composition is skewed to polar residues. Over residues 388 to 402 (QQQHSPQQQQQQQQQ) the composition is skewed to low complexity. A 9aaTAD 3 motif is present at residues 445-453 (GGLYSTFTY). The disordered stretch occupies residues 462–494 (YTPIADTSGVPSIPQTHSPQHWEQPVYTQLTRP). Positions 470–494 (GVPSIPQTHSPQHWEQPVYTQLTRP) are enriched in polar residues.

In terms of assembly, interacts with SNAI2; triggers neural crest delamination in a phosphorylation dependent manner. Interacts with UBE2I. Phosphorylated at Ser-181 in the developing neural tube. Phosphorylation at either Ser-64 or Ser-181 is required for sumoylation, but phosphorylation is not dependent on sumoylation. Sumoylation is enhanced by PKA. Phosphorylation is required for interaction with SNAI2 to trigger neural crest delamination and for an efficient trunk neural crest delamination, whereas sumoylation plays a less significant role. Phosphorylation and sumoylation are induced by BMP signaling pathway. In terms of processing, sumoylated at Lys-376; phosphorylation at either Ser-64 or Ser-181 is required for sumoylation. Sumoylation is induced by BMP signaling pathway.

Its subcellular location is the nucleus. Functionally, transcription factor that plays a key role in chondrocytes differentiation and skeletal development. Specifically binds the 5'-ACAAAG-3' DNA motif present in enhancers and super-enhancers and promotes expression of genes important for chondrogenesis, including COL2A1. Plays a central role in successive steps of chondrocyte differentiation. Absolutely required for precartilaginous condensation, the first step in chondrogenesis during which skeletal progenitors differentiate into prechondrocytes. Together with SOX5 and SOX6, required for overt chondrogenesis when condensed prechondrocytes differentiate into early stage chondrocytes, the second step in chondrogenesis. Later, required to direct hypertrophic maturation and block osteoblast differentiation of growth plate chondrocytes: maintains chondrocyte columnar proliferation, delays prehypertrophy and then prevents osteoblastic differentiation of chondrocytes. Also required for chondrocyte hypertrophy, both indirectly, by keeping the lineage fate of chondrocytes, and directly, by remaining present in upper hypertrophic cells. Low lipid levels are the main nutritional determinant for chondrogenic commitment of skeletal progenitor cells: when lipids levels are low, FOXO transcription factors promote expression of SOX9, which induces chondrogenic commitment and suppresses fatty acid oxidation. In addition to cartilage development, also acts as a regulator of proliferation and differentiation in epithelial stem/progenitor cells. In response to bone morphogenetic protein stimulus, phosphorylation is induced and then sumoylation, allowing cooperation with SNAI2 to trigger neural crest delamination. This Gallus gallus (Chicken) protein is Transcription factor SOX-9.